The sequence spans 401 residues: Argininosuccinate synthase (401 aa).

ATP is bound by residues 11–19 (AYSGGLDTS) and alanine 38. Residues tyrosine 89 and serine 94 each coordinate L-citrulline. Glycine 119 is a binding site for ATP. L-aspartate contacts are provided by threonine 121, asparagine 125, and aspartate 126. Residue asparagine 125 coordinates L-citrulline. L-citrulline is bound by residues arginine 129, serine 180, serine 189, glutamate 265, and tyrosine 277.

This sequence belongs to the argininosuccinate synthase family. Type 1 subfamily. Homotetramer.

Its subcellular location is the cytoplasm. The enzyme catalyses L-citrulline + L-aspartate + ATP = 2-(N(omega)-L-arginino)succinate + AMP + diphosphate + H(+). It participates in amino-acid biosynthesis; L-arginine biosynthesis; L-arginine from L-ornithine and carbamoyl phosphate: step 2/3. This is Argininosuccinate synthase from Syntrophus aciditrophicus (strain SB).